The sequence spans 270 residues: 3-phenylpropionate-dihydrodiol/cinnamic acid-dihydrodiol dehydrogenase (270 aa).

10–34 (FITGGGSGLGLALVERFIEEGAQVA) is a binding site for NAD(+). Substrate is bound at residue Ser143. Tyr156 serves as the catalytic Proton acceptor.

This sequence belongs to the short-chain dehydrogenases/reductases (SDR) family.

It carries out the reaction 3-(cis-5,6-dihydroxycyclohexa-1,3-dien-1-yl)propanoate + NAD(+) = 3-(2,3-dihydroxyphenyl)propanoate + NADH + H(+). The enzyme catalyses (2E)-3-(cis-5,6-dihydroxycyclohexa-1,3-dien-1-yl)prop-2-enoate + NAD(+) = (2E)-3-(2,3-dihydroxyphenyl)prop-2-enoate + NADH + H(+). It functions in the pathway aromatic compound metabolism; 3-phenylpropanoate degradation. Functionally, converts 3-phenylpropionate-dihydrodiol (PP-dihydrodiol) and cinnamic acid-dihydrodiol (CI-dihydrodiol) into 3-(2,3-dihydroxylphenyl)propanoic acid (DHPP) and 2,3-dihydroxicinnamic acid (DHCI), respectively. The chain is 3-phenylpropionate-dihydrodiol/cinnamic acid-dihydrodiol dehydrogenase from Escherichia coli O17:K52:H18 (strain UMN026 / ExPEC).